The chain runs to 117 residues: Prefoldin subunit beta (117 aa).

The protein belongs to the prefoldin subunit beta family. In terms of assembly, heterohexamer of two alpha and four beta subunits.

The protein localises to the cytoplasm. Its function is as follows. Molecular chaperone capable of stabilizing a range of proteins. Seems to fulfill an ATP-independent, HSP70-like function in archaeal de novo protein folding. This is Prefoldin subunit beta from Methanococcoides burtonii (strain DSM 6242 / NBRC 107633 / OCM 468 / ACE-M).